A 470-amino-acid chain; its full sequence is Suppressor of SWI4 1 homolog (470 aa).

In terms of domain architecture, Brix spans P29–N292. Phosphoserine is present on residues S238 and S240. 2 disordered regions span residues S240 to Q264 and A323 to N470. Residues A342–R355 are compositionally biased toward basic residues. S362 is modified (phosphoserine). K441 is subject to N6-acetyllysine. A compositionally biased stretch (basic residues) spans Q447–A457.

It is found in the nucleus. The protein resides in the nucleolus. Functionally, may have a role in cell growth. The sequence is that of Suppressor of SWI4 1 homolog (Ppan) from Mus musculus (Mouse).